Consider the following 574-residue polypeptide: Sentrin-specific protease 3 (574 aa).

Residues 1-125 form a disordered region; that stretch reads MKETIQGTGS…PTHRKTCSQR (125 aa). 3 positions are modified to phosphoserine: Ser-54, Ser-73, and Ser-75. Positions 74 to 93 are enriched in acidic residues; it reads ASEEEEEEEEEEDEDEEEEV. Residues 112–125 are compositionally biased toward basic residues; that stretch reads RPSRPTHRKTCSQR. 2 short sequence motifs (nuclear localization signal) span residues 125-128 and 153-159; these read RRRR and RHRGRRR. Positions 161–181 are disordered; sequence LAHPKNHLSPQQGGATPQVPS. At Ser-169 the chain carries Phosphoserine. Thr-176 carries the post-translational modification Phosphothreonine. Ser-181, Ser-188, Ser-212, and Ser-232 each carry phosphoserine. A protease region spans residues 386 to 543; that stretch reads HVLTMDDLGT…AFVLQYCKHL (158 aa). Active-site residues include His-465 and Asp-482. Cys-532 functions as the Nucleophile in the catalytic mechanism.

Belongs to the peptidase C48 family. In terms of assembly, component of some MLL1/MLL complex, at least composed of the core components KMT2A/MLL1, ASH2L, HCFC1/HCF1, WDR5 and RBBP5, as well as the facultative components BACC1, CHD8, E2F6, HSP70, INO80C, KANSL1, LAS1L, MAX, MCRS1, MGA, MYST1/MOF, PELP1, PHF20, PRP31, RING2, RUVB1/TIP49A, RUVB2/TIP49B, SENP3, TAF1, TAF4, TAF6, TAF7, TAF9 and TEX10. Interacts with EP300, NPM1 and CDCA8. Component of the 5FMC complex, at least composed of PELP1, LAS1L, TEX10, WDR18 and SENP3; the complex interacts with methylated CHTOP and ZNF148. Interacts with NOL9. Interacts with CCAR2.

The protein localises to the nucleus. It localises to the nucleolus. It is found in the nucleoplasm. The protein resides in the cytoplasm. Its activity is regulated as follows. On oxidative stress, SENP3 degradation is blocked by inhibition of its ubiquitination, which stabilizes it as it accumulates in the nucleoplasm. Functionally, protease that releases SUMO2 and SUMO3 monomers from sumoylated substrates, but has only weak activity against SUMO1 conjugates. Deconjugates SUMO2 from MEF2D, which increases its transcriptional activation capability. Deconjugates SUMO2 and SUMO3 from CDCA8. Redox sensor that, when redistributed into nucleoplasm, can act as an effector to enhance HIF1A transcriptional activity by desumoylating EP300. Required for rRNA processing through deconjugation of SUMO2 and SUMO3 from nucleophosmin, NPM1. Plays a role in the regulation of sumoylation status of ZNF148. Functions as a component of the Five Friends of Methylated CHTOP (5FMC) complex; the 5FMC complex is recruited to ZNF148 by methylated CHTOP, leading to desumoylation of ZNF148 and subsequent transactivation of ZNF148 target genes. Deconjugates SUMO2 from KAT5. Catalyzes desumoylation of MRE11. This Homo sapiens (Human) protein is Sentrin-specific protease 3.